A 639-amino-acid chain; its full sequence is UvrABC system protein C (639 aa).

In terms of domain architecture, GIY-YIG spans 20-97 (ERSGVYRMFD…IKKFQPKFNI (78 aa)). One can recognise a UVR domain in the interval 207 to 242 (KELQENLSRKMEELSSQMRFEEAAEIRDRIKALSYV).

The protein belongs to the UvrC family. Interacts with UvrB in an incision complex.

It is found in the cytoplasm. Its function is as follows. The UvrABC repair system catalyzes the recognition and processing of DNA lesions. UvrC both incises the 5' and 3' sides of the lesion. The N-terminal half is responsible for the 3' incision and the C-terminal half is responsible for the 5' incision. The sequence is that of UvrABC system protein C from Rickettsia conorii (strain ATCC VR-613 / Malish 7).